Here is a 185-residue protein sequence, read N- to C-terminus: Probable gluconokinase (185 aa).

11–18 (GVSGSGKS) contributes to the ATP binding site.

This sequence belongs to the gluconokinase GntK/GntV family.

The enzyme catalyses D-gluconate + ATP = 6-phospho-D-gluconate + ADP + H(+). The protein operates within carbohydrate acid metabolism; D-gluconate degradation. The chain is Probable gluconokinase (Idnk) from Rattus norvegicus (Rat).